We begin with the raw amino-acid sequence, 296 residues long: Glycine--tRNA ligase alpha subunit (296 aa).

The protein belongs to the class-II aminoacyl-tRNA synthetase family. As to quaternary structure, tetramer of two alpha and two beta subunits.

The protein resides in the cytoplasm. The catalysed reaction is tRNA(Gly) + glycine + ATP = glycyl-tRNA(Gly) + AMP + diphosphate. The sequence is that of Glycine--tRNA ligase alpha subunit from Francisella tularensis subsp. holarctica (strain FTNF002-00 / FTA).